The sequence spans 140 residues: MSSKKKQKMKRSSSTQVQALAQHISMSAHKARRVVDQIRGRSYAETLMLLELMPYRASYPIFKLVYSAAANASHNKSFNEADSFISKAEVNGGTIVKKFKPRAKGRSYPIKRPTCHITIVLKDRSKKKTDQDMFLGTKNV.

The protein belongs to the universal ribosomal protein uL22 family. As to quaternary structure, part of the 50S ribosomal subunit.

The protein localises to the plastid. Its subcellular location is the chloroplast. Its function is as follows. This protein binds specifically to 23S rRNA. In terms of biological role, the globular domain of the protein is located near the polypeptide exit tunnel on the outside of the subunit, while an extended beta-hairpin is found that lines the wall of the exit tunnel in the center of the 70S ribosome. The chain is Large ribosomal subunit protein uL22c (rpl22) from Calycanthus floridus var. glaucus (Eastern sweetshrub).